We begin with the raw amino-acid sequence, 233 residues long: uncharacterized protein (233 aa).

Belongs to the asfivirus H233R family.

This is an uncharacterized protein from African swine fever virus (isolate Tick/South Africa/Pretoriuskop Pr4/1996) (ASFV).